Reading from the N-terminus, the 442-residue chain is Syndecan-3 (442 aa).

2 disordered regions span residues 1-24 (MKPG…AAAG) and 57-87 (RPVD…SGYF). Over 1–387 (MKPGPPHRAG…SILERKEVLV (387 aa)) the chain is Extracellular. Residues 13 to 24 (HGAGAGAGAAAG) are compositionally biased toward gly residues. A compositionally biased stretch (acidic residues) spans 63-77 (GSGDDDSFPDDELDD). O-linked (Xyl...) (glycosaminoglycan) serine glycans are attached at residues Ser80, Ser82, Ser84, and Ser91. O-linked (GalNAc) serine; by GALNT13 glycosylation occurs at Ser108. O-linked (GalNAc) threonine; by GALNT13 glycosylation is found at Thr109 and Thr110. Disordered regions lie at residues 150-173 (EEPS…STGD), 225-326 (TTPE…ETTQ), and 340-367 (AAKA…AIDS). 3 stretches are compositionally biased toward low complexity: residues 156–173 (ATTV…STGD), 225–238 (TTPE…TAAV), and 275–286 (TLPLGTTAPGPT). O-linked (GalNAc) serine; by GALNT13 glycosylation occurs at Ser160. O-linked (GalNAc) threonine; by GALNT13 glycans are attached at residues Thr161, Thr162, and Thr169. A glycan (O-linked (GalNAc) serine; by GALNT13) is linked at Ser170. Residue Thr171 is glycosylated (O-linked (GalNAc) threonine; by GALNT13). A compositionally biased stretch (polar residues) spans 288–299 (VAQTPTPETFLT). 2 O-linked (Xyl...) (glycosaminoglycan) serine glycosylation sites follow: Ser314 and Ser367. A helical transmembrane segment spans residues 388–408 (AVIVGGVVGALFAAFLVTLLI). Residues Tyr409, Tyr419, Tyr431, and Tyr441 each carry the phosphotyrosine modification. Topologically, residues 409-442 (YRMKKKDEGSYTLEEPKQASVTYQKPDKQEEFYA) are cytoplasmic. Residues 419–442 (YTLEEPKQASVTYQKPDKQEEFYA) are disordered. The span at 433–442 (KPDKQEEFYA) shows a compositional bias: basic and acidic residues.

This sequence belongs to the syndecan proteoglycan family. As to quaternary structure, interacts with TIAM1. Interacts with PTN (via heparan sulfate chains); this interaction mediates the neurite outgrowth-promoting signal from PTN to the cytoskeleton of growing neurites; this interaction mediates osteoblast recruitment. Interacts with MDK; this interaction induces SDC3 clustering; this interaction induces neuronal cell adhesion and neurite outgrowth. Post-translationally, O-glycosylated within the Thr/Ser-rich region which could interact with lectin domains on other molecules. As to expression, expressed in the nervous system, the adrenal gland, and the spleen.

The protein localises to the cell membrane. Cell surface proteoglycan that may bear heparan sulfate. May have a role in the organization of cell shape by affecting the actin cytoskeleton, possibly by transferring signals from the cell surface in a sugar-dependent mechanism. This is Syndecan-3 (SDC3) from Homo sapiens (Human).